The primary structure comprises 537 residues: Glutamyl-tRNA(Gln) amidotransferase subunit B, chloroplastic/mitochondrial (537 aa).

It belongs to the GatB/GatE family. GatB subfamily. Subunit of the heterotrimeric GatCAB amidotransferase (AdT) complex, composed of A, B and C subunits.

Its subcellular location is the mitochondrion. The protein resides in the plastid. It localises to the chloroplast. The catalysed reaction is L-glutamyl-tRNA(Gln) + L-glutamine + ATP + H2O = L-glutaminyl-tRNA(Gln) + L-glutamate + ADP + phosphate + H(+). Its function is as follows. Allows the formation of correctly charged Gln-tRNA(Gln) through the transamidation of misacylated Glu-tRNA(Gln) in chloroplasts and mitochondria. The reaction takes place in the presence of glutamine and ATP through an activated gamma-phospho-Glu-tRNA(Gln). This is Glutamyl-tRNA(Gln) amidotransferase subunit B, chloroplastic/mitochondrial from Ostreococcus tauri.